The primary structure comprises 75 residues: Translation initiation factor IF-1 1 (75 aa).

The 74-residue stretch at methionine 1–arginine 74 folds into the S1-like domain.

It belongs to the IF-1 family. Component of the 30S ribosomal translation pre-initiation complex which assembles on the 30S ribosome in the order IF-2 and IF-3, IF-1 and N-formylmethionyl-tRNA(fMet); mRNA recruitment can occur at any time during PIC assembly.

The protein localises to the cytoplasm. One of the essential components for the initiation of protein synthesis. Stabilizes the binding of IF-2 and IF-3 on the 30S subunit to which N-formylmethionyl-tRNA(fMet) subsequently binds. Helps modulate mRNA selection, yielding the 30S pre-initiation complex (PIC). Upon addition of the 50S ribosomal subunit IF-1, IF-2 and IF-3 are released leaving the mature 70S translation initiation complex. In Symbiobacterium thermophilum (strain DSM 24528 / JCM 14929 / IAM 14863 / T), this protein is Translation initiation factor IF-1 1.